The sequence spans 222 residues: Riboflavin kinase (222 aa).

Positions 1–92 (MVEAEDLQSL…VRIFNPDQRG (92 aa)) are unknown. Positions 93 to 222 (YTLTGTVISG…DTIEVEITHD (130 aa)) are riboflavin kinase. 102–107 (GLGEGR) contributes to the CDP binding site. Mg(2+) is bound by residues threonine 131 and asparagine 133. FMN-binding residues include threonine 188 and glutamate 196. 201–204 (CELR) serves as a coordination point for CDP.

Belongs to the archaeal riboflavin kinase family. The cofactor is Mg(2+).

It catalyses the reaction riboflavin + CTP = CDP + FMN + H(+). Its pathway is cofactor biosynthesis; FMN biosynthesis; FMN from riboflavin (CTP route): step 1/1. Functionally, catalyzes the CTP-dependent phosphorylation of riboflavin (vitamin B2) to form flavin mononucleotide (FMN). This is Riboflavin kinase (ribK) from Methanoculleus marisnigri (strain ATCC 35101 / DSM 1498 / JR1).